The following is a 405-amino-acid chain: L-carnitine CoA-transferase (405 aa).

Residues Lys-97 and Arg-104 each contribute to the CoA site. Asp-169 acts as the Nucleophile in catalysis.

Belongs to the CoA-transferase III family. CaiB subfamily. Homodimer.

It is found in the cytoplasm. It carries out the reaction crotonobetainyl-CoA + (R)-carnitine = crotonobetaine + (R)-carnitinyl-CoA. It catalyses the reaction 4-(trimethylamino)butanoyl-CoA + (R)-carnitine = (R)-carnitinyl-CoA + 4-(trimethylamino)butanoate. Its pathway is amine and polyamine metabolism; carnitine metabolism. Its function is as follows. Catalyzes the reversible transfer of the CoA moiety from gamma-butyrobetainyl-CoA to L-carnitine to generate L-carnitinyl-CoA and gamma-butyrobetaine. Is also able to catalyze the reversible transfer of the CoA moiety from gamma-butyrobetainyl-CoA or L-carnitinyl-CoA to crotonobetaine to generate crotonobetainyl-CoA. This chain is L-carnitine CoA-transferase, found in Escherichia coli (strain K12 / MC4100 / BW2952).